Consider the following 249-residue polypeptide: Segregation and condensation protein A (249 aa).

This sequence belongs to the ScpA family. In terms of assembly, component of a cohesin-like complex composed of ScpA, ScpB and the Smc homodimer, in which ScpA and ScpB bind to the head domain of Smc. The presence of the three proteins is required for the association of the complex with DNA.

It is found in the cytoplasm. In terms of biological role, participates in chromosomal partition during cell division. May act via the formation of a condensin-like complex containing Smc and ScpB that pull DNA away from mid-cell into both cell halves. This is Segregation and condensation protein A from Listeria monocytogenes serotype 4a (strain HCC23).